Consider the following 352-residue polypeptide: MVHKVSQREFSRCYKRNCDCICRKPKQRRNVYLNYSLELLITIFKEVIPNLPMDKKIAFVKDYGAYLKVEKGLITCKIKNQVKWSIAPTELHSIVVLTNSSISSEVVKVANEYGIEIVFFNKHEPYAKLIPAKYAGSFKVWLKQLTAWKRRKVEFAKAFIYGKVHNQWVTLRYYERKYGYNLTSQELDRLAREITFVNTAEEVMQKEAEAAKVYWRGVKSLLPKSLGFKGRMKRVSDNLDPFNRALNIGYGMLRKVVWGAVISVGLNPYIGFLHKFRSGRISLVFDLMEEFRSPFVDRKLIGLARESADKVTDLKTVYSLFSDVKEDEIYTQARRLVNAILNDEEYRPYLAK.

Residues Glu-207, His-274, and Glu-289 each contribute to the Mn(2+) site.

It belongs to the CRISPR-associated endonuclease Cas1 family. As to quaternary structure, homodimer, forms a heterotetramer with a Cas2 homodimer. It depends on Mg(2+) as a cofactor. Mn(2+) serves as cofactor.

Its function is as follows. CRISPR (clustered regularly interspaced short palindromic repeat), is an adaptive immune system that provides protection against mobile genetic elements (viruses, transposable elements and conjugative plasmids). CRISPR clusters contain spacers, sequences complementary to antecedent mobile elements, and target invading nucleic acids. CRISPR clusters are transcribed and processed into CRISPR RNA (crRNA). Acts as a dsDNA endonuclease. Involved in the integration of spacer DNA into the CRISPR cassette. The protein is CRISPR-associated endonuclease Cas1 1 of Saccharolobus solfataricus (strain ATCC 35092 / DSM 1617 / JCM 11322 / P2) (Sulfolobus solfataricus).